Consider the following 1187-residue polypeptide: Protein CHROMATIN REMODELING 8 (1187 aa).

A disordered region spans residues 1-55 (MEEDEDQFLLSSLGVTSANPEDLEQKILDEATKKPDNDEGGSVEEKSTQLEGTNL). Polar residues predominate over residues 9–19 (LLSSLGVTSAN). The span at 23–48 (LEQKILDEATKKPDNDEGGSVEEKST) shows a compositional bias: basic and acidic residues. Positions 110–170 (LQHALATDRL…LKRKLKEIRK (61 aa)) form a coiled coil. The Nuclear localization signal 1 motif lies at 162 to 169 (KRKLKEIR). Disordered regions lie at residues 223-247 (GFERRLQQPGPSNSRNLPEGDDENE) and 273-343 (DAED…DGRR). 2 consecutive short sequence motifs (nuclear localization signal) follow at residues 290–297 (LRKLYKTP) and 310–317 (GKKSKKTR). Residues 305–328 (KKRKAGKKSKKTRPLPEKKWRKRI) show a composition bias toward basic residues. Residues 397–594 (WELHCQRAGG…WSLFDFVFPG (198 aa)) enclose the Helicase ATP-binding domain. Position 410 to 417 (410 to 417 (DEMGLGKT)) interacts with ATP. Residues 467–501 (SAQDSGHGKGQGKASESDYDSESSVDSDHEPKSKN) are disordered. The segment covering 492-501 (DSDHEPKSKN) has biased composition (basic and acidic residues). The DEGH box motif lies at 545–548 (DEGH). One can recognise a Helicase C-terminal domain in the interval 730–890 (KVVAEVLKVW…RRFFKARDMK (161 aa)). The stretch at 987–1016 (NANDEEEKMRLEHQASQVAQRAAEALRQSR) forms a coiled coil. Over residues 1050-1059 (VNSRLTQTGD) the composition is skewed to polar residues. A disordered region spans residues 1050–1075 (VNSRLTQTGDKPSAIKNGISAGLSSG).

The protein belongs to the SNF2/RAD54 helicase family. In terms of assembly, homodimer. Binds DNA.

The protein localises to the nucleus. Essential factor involved in transcription-coupled nucleotide excision repair (TCR) which allows RNA polymerase II-blocking lesions to be rapidly removed from the transcribed strand of active genes. Upon DNA-binding, it locally modifies DNA conformation by wrapping the DNA around itself, thereby modifying the interface between stalled RNA polymerase II and DNA. It is required for transcription-coupled repair complex formation. This chain is Protein CHROMATIN REMODELING 8, found in Arabidopsis thaliana (Mouse-ear cress).